A 289-amino-acid polypeptide reads, in one-letter code: ATP synthase subunit a (289 aa).

Transmembrane regions (helical) follow at residues 43-63 (AFHVDTLGWSVLLGVVFLFIF), 104-124 (IAPLALTVFVWIFLLNLIDLV), 160-180 (ISVFALIVFYSIKVKGIGGFL), 193-213 (IVVQILLIPVNFLLEFVTLIA), 232-252 (IFILIAVMFGSGMFLLSALGV), and 259-279 (AVFHILIITLQAFIFMMLTIV).

It belongs to the ATPase A chain family. F-type ATPases have 2 components, CF(1) - the catalytic core - and CF(0) - the membrane proton channel. CF(1) has five subunits: alpha(3), beta(3), gamma(1), delta(1), epsilon(1). CF(0) has three main subunits: a(1), b(2) and c(9-12). The alpha and beta chains form an alternating ring which encloses part of the gamma chain. CF(1) is attached to CF(0) by a central stalk formed by the gamma and epsilon chains, while a peripheral stalk is formed by the delta and b chains.

The protein resides in the cell inner membrane. Functionally, key component of the proton channel; it plays a direct role in the translocation of protons across the membrane. The chain is ATP synthase subunit a from Pseudomonas paraeruginosa (strain DSM 24068 / PA7) (Pseudomonas aeruginosa (strain PA7)).